The sequence spans 679 residues: Pollen receptor-like kinase 4 (679 aa).

Positions M1 to S39 are cleaved as a signal peptide. LRR repeat units follow at residues I118–F141, G142–G165, H167–P191, L193–L217, and S234–S257. Low complexity predominate over residues L252 to P269. A disordered region spans residues L252–E271. A helical membrane pass occupies residues F278–V298. The segment at S311–S344 is disordered. The segment covering D319–A336 has biased composition (basic and acidic residues). Residues R372 to L646 form the Protein kinase domain. Phosphoserine is present on S374. ATP is bound by residues L378–S386 and K400. 2 positions are modified to phosphoserine: S452 and S455. T472 carries the post-translational modification Phosphothreonine. Y542 is modified (phosphotyrosine).

This sequence belongs to the protein kinase superfamily. Ser/Thr protein kinase family. In terms of assembly, interacts in vitro with ROPGEF1 (via PRONE domain). Interacts weakly with the GRI peptide. As to expression, expressed in pollen and/or in flowers, but not in leaves.

It is found in the membrane. It carries out the reaction L-seryl-[protein] + ATP = O-phospho-L-seryl-[protein] + ADP + H(+). The enzyme catalyses L-threonyl-[protein] + ATP = O-phospho-L-threonyl-[protein] + ADP + H(+). Receptor-like kinase involved in the control of pollen germination and pollen tube polar growth. Can phosphorylate ROPGEF1 in vitro. The protein is Pollen receptor-like kinase 4 of Arabidopsis thaliana (Mouse-ear cress).